A 31-amino-acid chain; its full sequence is Cytochrome b6-f complex subunit 6 (31 aa).

The helical transmembrane segment at 4 to 26 (ITSYFGFLLTALTITSALFIGLS) threads the bilayer.

It belongs to the PetL family. As to quaternary structure, the 4 large subunits of the cytochrome b6-f complex are cytochrome b6, subunit IV (17 kDa polypeptide, PetD), cytochrome f and the Rieske protein, while the 4 small subunits are PetG, PetL, PetM and PetN. The complex functions as a dimer.

The protein resides in the plastid. The protein localises to the chloroplast thylakoid membrane. Its function is as follows. Component of the cytochrome b6-f complex, which mediates electron transfer between photosystem II (PSII) and photosystem I (PSI), cyclic electron flow around PSI, and state transitions. PetL is important for photoautotrophic growth as well as for electron transfer efficiency and stability of the cytochrome b6-f complex. This chain is Cytochrome b6-f complex subunit 6, found in Lactuca sativa (Garden lettuce).